The following is a 205-amino-acid chain: Inactive ribonuclease-like protein 9 (205 aa).

Positions 1 to 26 are cleaved as a signal peptide; it reads MMRTLITTHPLPLLLLPQQLLQPVQF. Intrachain disulfides connect C98/C153, C116/C168, and C123/C130. N-linked (GlcNAc...) asparagine glycans are attached at residues N131 and N143.

This sequence belongs to the pancreatic ribonuclease family.

Its subcellular location is the secreted. Functionally, does not exhibit any ribonuclease activity. The sequence is that of Inactive ribonuclease-like protein 9 (RNASE9) from Pan troglodytes (Chimpanzee).